Consider the following 506-residue polypeptide: Deoxyguanosinetriphosphate triphosphohydrolase (506 aa).

One can recognise an HD domain in the interval R66–C274.

This sequence belongs to the dGTPase family. Type 1 subfamily. As to quaternary structure, homotetramer. The cofactor is Mg(2+).

The catalysed reaction is dGTP + H2O = 2'-deoxyguanosine + triphosphate + H(+). DGTPase preferentially hydrolyzes dGTP over the other canonical NTPs. The chain is Deoxyguanosinetriphosphate triphosphohydrolase from Yersinia pestis bv. Antiqua (strain Antiqua).